Here is a 230-residue protein sequence, read N- to C-terminus: Phosphoenolpyruvate guanylyltransferase (230 aa).

The phosphoenolpyruvate site is built by threonine 139, glycine 155, and serine 158.

This sequence belongs to the CofC family.

The catalysed reaction is phosphoenolpyruvate + GTP + H(+) = enolpyruvoyl-2-diphospho-5'-guanosine + diphosphate. It participates in cofactor biosynthesis; coenzyme F420 biosynthesis. Guanylyltransferase that catalyzes the activation of phosphoenolpyruvate (PEP) as enolpyruvoyl-2-diphospho-5'-guanosine, via the condensation of PEP with GTP. It is involved in the biosynthesis of coenzyme F420, a hydride carrier cofactor. The sequence is that of Phosphoenolpyruvate guanylyltransferase from Thermobaculum terrenum (strain ATCC BAA-798 / CCMEE 7001 / YNP1).